Here is a 357-residue protein sequence, read N- to C-terminus: Protein Wnt-5b (357 aa).

The signal sequence occupies residues 1–18 (MPGIRLLLAAALLCCPPP). A disulfide bridge links cysteine 81 with cysteine 92. N-linked (GlcNAc...) asparagine glycosylation is found at asparagine 91 and asparagine 97. Intrachain disulfides connect cysteine 131/cysteine 139, cysteine 141/cysteine 159, cysteine 215/cysteine 229, cysteine 217/cysteine 224, cysteine 286/cysteine 317, cysteine 302/cysteine 312, cysteine 316/cysteine 356, cysteine 332/cysteine 347, cysteine 334/cysteine 344, and cysteine 339/cysteine 340. A lipid anchor (O-palmitoleoyl serine; by PORCN) is attached at serine 221. 2 N-linked (GlcNAc...) asparagine glycosylation sites follow: asparagine 289 and asparagine 303.

Belongs to the Wnt family. In terms of processing, palmitoleoylation is required for efficient binding to frizzled receptors. Depalmitoleoylation leads to Wnt signaling pathway inhibition. Predominantly in neuroectodermal tissues.

The protein localises to the secreted. It is found in the extracellular space. Its subcellular location is the extracellular matrix. Its function is as follows. Ligand for members of the frizzled family of seven transmembrane receptors. Probable developmental protein. May be a signaling molecule which affects the development of discrete regions of tissues. Is likely to signal over only few cell diameters. The sequence is that of Protein Wnt-5b (WNT-5B) from Ambystoma mexicanum (Axolotl).